We begin with the raw amino-acid sequence, 1025 residues long: Leucyl-cystinyl aminopeptidase (1025 aa).

Met1 is modified (N-acetylmethionine). Topologically, residues 1–109 are cytoplasmic; it reads MESFTNDRLQ…DGTCSLPSAR (109 aa). The short motif at 53-54 is the Dileucine internalization motif element; the sequence is LL. The residue at position 70 (Tyr70) is a Phosphotyrosine. The short motif at 76–77 is the Dileucine internalization motif element; sequence LL. Phosphoserine is present on residues Ser80 and Ser91. Residues 96 to 101 are tankyrase binding; that stretch reads RQSPDG. Residues 110-131 form a helical; Signal-anchor for type II membrane protein membrane-spanning segment; sequence TLVICVFVIVVAVSVIMVIYLL. Over 132–1025 the chain is Extracellular; sequence PRCTFTKEGC…RNLKTLSQWL (894 aa). Residues Asn145, Asn184, Asn215, Asn256, and Asn266 are each glycosylated (N-linked (GlcNAc...) asparagine). Glu295 serves as a coordination point for substrate. N-linked (GlcNAc...) asparagine glycans are attached at residues Asn368 and Asn374. Substrate is bound at residue 428–432; the sequence is GAMEN. N-linked (GlcNAc...) asparagine glycosylation occurs at Asn447. His464 provides a ligand contact to Zn(2+). Glu465 serves as the catalytic Proton acceptor. His468 and Glu487 together coordinate Zn(2+). N-linked (GlcNAc...) asparagine glycosylation is found at Asn525, Asn578, Asn664, Asn682, Asn695, Asn758, Asn834, Asn850, and Asn989.

The protein belongs to the peptidase M1 family. In terms of assembly, homodimer. Binds tankyrases 1 and 2. Requires Zn(2+) as cofactor.

Its subcellular location is the cell membrane. The protein localises to the endomembrane system. It carries out the reaction Release of an N-terminal amino acid, Cys-|-Xaa-, in which the half-cystine residue is involved in a disulfide loop, notably in oxytocin or vasopressin. Hydrolysis rates on a range of aminoacyl arylamides exceed that for the cystinyl derivative, however.. Functionally, release of an N-terminal amino acid, cleave before cysteine, leucine as well as other amino acids. Degrades peptide hormones such as oxytocin, vasopressin and angiotensin III, and plays a role in maintaining homeostasis during pregnancy. May be involved in the inactivation of neuronal peptides in the brain. Cleaves Met-enkephalin and dynorphin. Binds angiotensin IV and may be the angiotensin IV receptor in the brain. This Mus musculus (Mouse) protein is Leucyl-cystinyl aminopeptidase (Lnpep).